Reading from the N-terminus, the 329-residue chain is Quinone-oxidoreductase QR1, chloroplastic (329 aa).

Belongs to the zinc-containing alcohol dehydrogenase family. Quinone oxidoreductase subfamily.

Its subcellular location is the plastid. The protein localises to the chloroplast outer membrane. The enzyme catalyses 2 a quinone + NADPH + H(+) = 2 a 1,4-benzosemiquinone + NADP(+). Inhibited by dicumarol. In terms of biological role, NADPH-dependent single-electron reducing quinone reductase. Involved in haustorium initiation in parasitic plants through redox cycling of exogenous haustorium-inducing factors. Can use 9,10-phenanthrenequinone (PAQ), 1,2-naphthoquinone, 5-hydroxy-1,4-naphthoquinone (juglone) and 2,6-dimethoxy-p-benzoquinone (DMBQ) as substrates, but has no activity with menadione, diamide, 2,3-dimethoxy-5-methyl-1,4-benzoquinone or 1,4-naphthoquinone. This Triphysaria versicolor (Yellow owl's clover) protein is Quinone-oxidoreductase QR1, chloroplastic.